Reading from the N-terminus, the 72-residue chain is Mitotic-spindle organizing protein 1 (72 aa).

Belongs to the MOZART1 family. As to quaternary structure, part of the gamma-tubulin complex.

It localises to the cytoplasm. The protein resides in the cytoskeleton. It is found in the microtubule organizing center. The protein localises to the spindle pole body. In terms of biological role, required for gamma-tubulin complex recruitment to the microtubule organizing center (MTOC). This Cryptococcus neoformans var. neoformans serotype D (strain B-3501A) (Filobasidiella neoformans) protein is Mitotic-spindle organizing protein 1.